The chain runs to 204 residues: Holliday junction branch migration complex subunit RuvA (204 aa).

A domain I region spans residues 1-64 (MIGRLQGILL…EDAHLLFGFA (64 aa)). Residues 65-143 (QKTDRTLFRE…GIKQSDFFVE (79 aa)) are domain II. The interval 144 to 155 (STHIPLSPSIES) is flexible linker. The domain III stretch occupies residues 156–204 (HSESSSDEAISALIALGYKPAEAEKMVKRVAKPELTSEQVIREALKAAL).

This sequence belongs to the RuvA family. As to quaternary structure, homotetramer. Forms an RuvA(8)-RuvB(12)-Holliday junction (HJ) complex. HJ DNA is sandwiched between 2 RuvA tetramers; dsDNA enters through RuvA and exits via RuvB. An RuvB hexamer assembles on each DNA strand where it exits the tetramer. Each RuvB hexamer is contacted by two RuvA subunits (via domain III) on 2 adjacent RuvB subunits; this complex drives branch migration. In the full resolvosome a probable DNA-RuvA(4)-RuvB(12)-RuvC(2) complex forms which resolves the HJ.

The protein localises to the cytoplasm. The RuvA-RuvB-RuvC complex processes Holliday junction (HJ) DNA during genetic recombination and DNA repair, while the RuvA-RuvB complex plays an important role in the rescue of blocked DNA replication forks via replication fork reversal (RFR). RuvA specifically binds to HJ cruciform DNA, conferring on it an open structure. The RuvB hexamer acts as an ATP-dependent pump, pulling dsDNA into and through the RuvAB complex. HJ branch migration allows RuvC to scan DNA until it finds its consensus sequence, where it cleaves and resolves the cruciform DNA. This Haemophilus influenzae (strain 86-028NP) protein is Holliday junction branch migration complex subunit RuvA.